Here is a 228-residue protein sequence, read N- to C-terminus: Ribose-5-phosphate isomerase A (228 aa).

Residues 31-34 (TGST), 85-88 (DGAD), and 97-100 (KGGG) contribute to the substrate site. Residue glutamate 106 is the Proton acceptor of the active site. Lysine 124 contributes to the substrate binding site.

It belongs to the ribose 5-phosphate isomerase family. In terms of assembly, homodimer.

It catalyses the reaction aldehydo-D-ribose 5-phosphate = D-ribulose 5-phosphate. It functions in the pathway carbohydrate degradation; pentose phosphate pathway; D-ribose 5-phosphate from D-ribulose 5-phosphate (non-oxidative stage): step 1/1. Its function is as follows. Catalyzes the reversible conversion of ribose-5-phosphate to ribulose 5-phosphate. This Haloarcula marismortui (strain ATCC 43049 / DSM 3752 / JCM 8966 / VKM B-1809) (Halobacterium marismortui) protein is Ribose-5-phosphate isomerase A.